A 241-amino-acid polypeptide reads, in one-letter code: MMMKGTVTHQESFLNRIAESLGRERRKSGVSLPEWKYQPQYQTHAGCTEDDLVTMLKDHCVNIHTELIETDAAGLYDALRTQVNRFEGGPVIIPKDSRFETYGLQTLMTEEWPDEGIPVWEWDAEQGAKNIEKAEQANVGITFSEITLAESATVVLYASEHAGRSVSLLPTTYIAIIPKSSIVPRMTQASDILKQQIRDGVTVPSCINYITGPSNSADIEMDLVVGVHGPVKAAYILVNDR.

This sequence belongs to the LutC/YkgG family.

Its function is as follows. Is involved in L-lactate degradation and allows cells to grow with lactate as the sole carbon source. The polypeptide is Lactate utilization protein C (Bacillus velezensis (strain DSM 23117 / BGSC 10A6 / LMG 26770 / FZB42) (Bacillus amyloliquefaciens subsp. plantarum)).